The primary structure comprises 383 residues: Probable transcriptional repressor C1348.12 (383 aa).

Positions 34–60 (CVICRSKKQKCDGQLPCLYCKKYEYQC) form a DNA-binding region, zn(2)-C6 fungal-type.

It localises to the nucleus. Functionally, probable transcriptional repressor of multidrug resistance genes. The polypeptide is Probable transcriptional repressor C1348.12 (Schizosaccharomyces pombe (strain 972 / ATCC 24843) (Fission yeast)).